The following is a 447-amino-acid chain: Na(+)-translocating NADH-quinone reductase subunit A (447 aa).

It belongs to the NqrA family. Composed of six subunits; NqrA, NqrB, NqrC, NqrD, NqrE and NqrF.

The catalysed reaction is a ubiquinone + n Na(+)(in) + NADH + H(+) = a ubiquinol + n Na(+)(out) + NAD(+). Functionally, NQR complex catalyzes the reduction of ubiquinone-1 to ubiquinol by two successive reactions, coupled with the transport of Na(+) ions from the cytoplasm to the periplasm. NqrA to NqrE are probably involved in the second step, the conversion of ubisemiquinone to ubiquinol. The chain is Na(+)-translocating NADH-quinone reductase subunit A from Hahella chejuensis (strain KCTC 2396).